The following is a 197-amino-acid chain: Sodium/potassium-transporting ATPase subunit beta-1-interacting protein 3 (197 aa).

A run of 4 helical transmembrane segments spans residues 2–22 (GCCTGRCSLICLCALQLVSAL), 35–55 (APILGNFLHIIVVILGLFGTI), 62–82 (IMVYTVWTALWVTWNVFIICF), and 152–172 (VQILLSLVGFVYACYVISISM).

The protein belongs to the NKAIN family. Interacts with ATP1B1.

It localises to the cell membrane. The polypeptide is Sodium/potassium-transporting ATPase subunit beta-1-interacting protein 3 (NKAIN3) (Homo sapiens (Human)).